The sequence spans 433 residues: Tol-Pal system protein TolB (433 aa).

A signal peptide spans 1-26; it reads MSLMTKLGFRALVASCLIAAGGAAHA.

It belongs to the TolB family. The Tol-Pal system is composed of five core proteins: the inner membrane proteins TolA, TolQ and TolR, the periplasmic protein TolB and the outer membrane protein Pal. They form a network linking the inner and outer membranes and the peptidoglycan layer.

The protein localises to the periplasm. Part of the Tol-Pal system, which plays a role in outer membrane invagination during cell division and is important for maintaining outer membrane integrity. The polypeptide is Tol-Pal system protein TolB (Burkholderia thailandensis (strain ATCC 700388 / DSM 13276 / CCUG 48851 / CIP 106301 / E264)).